The chain runs to 523 residues: Carboxypeptidase Y (523 aa).

Positions 1-20 are cleaved as a signal peptide; sequence MILHTYIILSLLTIFPKAIG. The propeptide occupies 21 to 107; it reads LSLQMPMALE…QELPNYRLRV (87 aa). 5 cysteine pairs are disulfide-bonded: Cys-162–Cys-401, Cys-296–Cys-310, Cys-320–Cys-343, Cys-327–Cys-336, and Cys-365–Cys-371. Asn-193 carries an N-linked (GlcNAc...) asparagine glycan. Residue Ser-249 is part of the active site. A glycan (N-linked (GlcNAc...) asparagine) is linked at Asn-271. Asp-441 is an active-site residue. 2 N-linked (GlcNAc...) asparagine glycosylation sites follow: Asn-484 and Asn-487. Residue His-498 is part of the active site.

It belongs to the peptidase S10 family.

Its subcellular location is the vacuole. It catalyses the reaction Release of a C-terminal amino acid with broad specificity.. Involved in degradation of small peptides. This chain is Carboxypeptidase Y (PRC1), found in Komagataella phaffii (strain GS115 / ATCC 20864) (Yeast).